The following is a 110-amino-acid chain: Small heat shock protein hspG11 (110 aa).

The sHSP domain occupies 30-110 (KTIIDILPPM…KSTSTSSTFR (81 aa)). The segment at 78–110 (KDLNKQHNNNNNNNNNNNNLVIEKSTSTSSTFR) is disordered. Positions 85-96 (NNNNNNNNNNNN) are enriched in low complexity. Positions 101 to 110 (KSTSTSSTFR) are enriched in polar residues.

The protein belongs to the small heat shock protein (HSP20) family.

This Dictyostelium discoideum (Social amoeba) protein is Small heat shock protein hspG11 (hspG11).